Here is a 380-residue protein sequence, read N- to C-terminus: Cytochrome b (380 aa).

The next 4 membrane-spanning stretches (helical) occupy residues 33–53 (FGSLLGLCLIAQILTGLFLAM), 77–98 (WLIRNLHANGASFFFICLYLHV), 113–133 (WNIGVVLLLLVMMTAFVGYVL), and 178–198 (FFAFHFLFPFIIAAMVLLHLL). Heme b-binding residues include H83 and H97. The heme b site is built by H182 and H196. H201 contacts a ubiquinone. 4 consecutive transmembrane segments (helical) span residues 226-246 (YKDLFGFVILLLALSILTLFS), 288-308 (LGGVLALLASILILMVVPLLH), 320-340 (LTQILFWTLVADVAILTWIGG), and 347-367 (FITVGQVASVLYFALFLILIP).

Belongs to the cytochrome b family. In terms of assembly, the cytochrome bc1 complex contains 3 respiratory subunits (MT-CYB, CYC1 and UQCRFS1), 2 core proteins (UQCRC1 and UQCRC2) and probably 6 low-molecular weight proteins. Requires heme b as cofactor.

The protein resides in the mitochondrion inner membrane. Functionally, component of the ubiquinol-cytochrome c reductase complex (complex III or cytochrome b-c1 complex) that is part of the mitochondrial respiratory chain. The b-c1 complex mediates electron transfer from ubiquinol to cytochrome c. Contributes to the generation of a proton gradient across the mitochondrial membrane that is then used for ATP synthesis. This Allocyttus niger (Black oreo dory) protein is Cytochrome b (mt-cyb).